The primary structure comprises 308 residues: Aspartate carbamoyltransferase catalytic subunit (308 aa).

Residues R59 and T60 each contribute to the carbamoyl phosphate site. K87 contributes to the L-aspartate binding site. The carbamoyl phosphate site is built by R109, H139, and Q142. The L-aspartate site is built by R172 and R224. The carbamoyl phosphate site is built by A265 and P266.

Belongs to the aspartate/ornithine carbamoyltransferase superfamily. ATCase family. In terms of assembly, heterododecamer (2C3:3R2) of six catalytic PyrB chains organized as two trimers (C3), and six regulatory PyrI chains organized as three dimers (R2).

It carries out the reaction carbamoyl phosphate + L-aspartate = N-carbamoyl-L-aspartate + phosphate + H(+). It participates in pyrimidine metabolism; UMP biosynthesis via de novo pathway; (S)-dihydroorotate from bicarbonate: step 2/3. Functionally, catalyzes the condensation of carbamoyl phosphate and aspartate to form carbamoyl aspartate and inorganic phosphate, the committed step in the de novo pyrimidine nucleotide biosynthesis pathway. The sequence is that of Aspartate carbamoyltransferase catalytic subunit from Streptococcus thermophilus (strain ATCC BAA-491 / LMD-9).